Reading from the N-terminus, the 424-residue chain is MALPTPSDSTLPAEARGRGRRRRLVWTPSQSEALRACFERNPYPGIATRERLAQAIGIPEPRVQIWFQNERSRQLRQHRRESRPWPGRRGPPEGRRKRTAVTGSQTALLLRAFEKDRFPGIAAREELARETGLPESRIQIWFQNRRARHPGQGGRAPAQAGGLCSAAPGGGHPAPSWVAFAHTGAWGTGLPAPHVPCAPGALPQGAFVSQAARAAPALQPSQAAPAEGVSQPAPARGDFAYAAPAPPDGALSHPQAPRWPPHPGKSREDRDPQRDGLPGPCAVAQPGPAQAGPQGQGVLAPPTSQGSPWWGWGRGPQVAGAAWEPQAGAAPPPQPAPPDASASARQGQMQGIPAPSQALQEPAPWSALPCGLLLDELLASPEFLQQAQPLLETEAPGELEASEEAASLEAPLSEEEYRALLEEL.

Polar residues predominate over residues 1–10 (MALPTPSDST). Disordered regions lie at residues 1 to 24 (MALP…RRRL), 72 to 102 (SRQL…TAVT), 148 to 167 (RHPG…CSAA), 218 to 362 (LQPS…LQEP), and 388 to 414 (QPLL…PLSE). 2 consecutive DNA-binding regions (homeobox) follow at residues 19-78 (GRRR…LRQH) and 94-153 (GRRK…PGQG). The span at 265–274 (KSREDRDPQR) shows a compositional bias: basic and acidic residues. Low complexity-rich tracts occupy residues 278-302 (PGPC…LAPP) and 319-329 (AGAAWEPQAGA).

The protein resides in the nucleus. Its function is as follows. May be involved in transcriptional regulation. This chain is Double homeobox protein 4-like protein 2 (DUX4L2), found in Homo sapiens (Human).